Reading from the N-terminus, the 158-residue chain is Curculin-2 (158 aa).

An N-terminal signal peptide occupies residues methionine 1–alanine 22. In terms of domain architecture, Bulb-type lectin spans aspartate 23–cysteine 131. A disulfide bridge connects residues cysteine 51 and cysteine 74. Asparagine 103 carries N-linked (GlcNAc...) asparagine glycosylation. A propeptide spanning residues glycine 136–asparagine 158 is cleaved from the precursor.

Heterodimer with curculin-1; Disulfide-linked.

Functionally, taste-modifying protein; sweet-tasting. After curculin, water elicits a sweet taste, and sour substances induce a stronger sense of sweetness. The polypeptide is Curculin-2 (Molineria latifolia (Lumbah)).